Reading from the N-terminus, the 348-residue chain is Lipoyl synthase (348 aa).

Residues Cys55, Cys60, Cys66, Cys81, Cys85, Cys88, and Ser292 each coordinate [4Fe-4S] cluster. The region spanning Trp67–Ala281 is the Radical SAM core domain.

This sequence belongs to the radical SAM superfamily. Lipoyl synthase family. Requires [4Fe-4S] cluster as cofactor.

The protein localises to the cytoplasm. It catalyses the reaction [[Fe-S] cluster scaffold protein carrying a second [4Fe-4S](2+) cluster] + N(6)-octanoyl-L-lysyl-[protein] + 2 oxidized [2Fe-2S]-[ferredoxin] + 2 S-adenosyl-L-methionine + 4 H(+) = [[Fe-S] cluster scaffold protein] + N(6)-[(R)-dihydrolipoyl]-L-lysyl-[protein] + 4 Fe(3+) + 2 hydrogen sulfide + 2 5'-deoxyadenosine + 2 L-methionine + 2 reduced [2Fe-2S]-[ferredoxin]. It participates in protein modification; protein lipoylation via endogenous pathway; protein N(6)-(lipoyl)lysine from octanoyl-[acyl-carrier-protein]: step 2/2. Its function is as follows. Catalyzes the radical-mediated insertion of two sulfur atoms into the C-6 and C-8 positions of the octanoyl moiety bound to the lipoyl domains of lipoate-dependent enzymes, thereby converting the octanoylated domains into lipoylated derivatives. In Corynebacterium efficiens (strain DSM 44549 / YS-314 / AJ 12310 / JCM 11189 / NBRC 100395), this protein is Lipoyl synthase.